Here is a 643-residue protein sequence, read N- to C-terminus: Alpha-dioxygenase PIOX (643 aa).

His-167 (proton acceptor) is an active-site residue. Asp-168 provides a ligand contact to Ca(2+). His-172 is a heme b binding site. The Ca(2+) site is built by Thr-220, Trp-222, Asp-224, and Ser-226. 3 residues coordinate heme b: His-392, Arg-489, and Arg-493.

Belongs to the peroxidase family. Requires heme b as cofactor. Ca(2+) serves as cofactor.

The enzyme catalyses a 1,2-saturated fatty acid + O2 = a (2R)-2-hydroperoxy fatty acid. It catalyses the reaction (9Z,12Z,15Z)-octadecatrienoate + O2 = (R)-2-hydroperoxy-(9Z,12Z,15Z)-octadecatrienoate. The catalysed reaction is (9Z,12Z)-octadecadienoate + O2 = (2R,9Z,12Z)-2-hydroperoxyoctadecadienoate. In terms of biological role, alpha-dioxygenase that catalyzes the primary oxygenation step of a variety of 14-20 carbon fatty acids, containing up to three unsaturated bonds, into their corresponding 2R-hydroperoxides. Involved in the production of oxylipins that function in cell signaling, wound healing, and protection from infection. The polypeptide is Alpha-dioxygenase PIOX (Nicotiana tabacum (Common tobacco)).